A 547-amino-acid polypeptide reads, in one-letter code: Chaperonin GroEL (547 aa).

Residues 30–33 (TLGP), Lys-51, 87–91 (DGTTT), Gly-415, 479–481 (NAA), and Asp-495 each bind ATP.

The protein belongs to the chaperonin (HSP60) family. In terms of assembly, forms a cylinder of 14 subunits composed of two heptameric rings stacked back-to-back. Interacts with the co-chaperonin GroES.

It is found in the cytoplasm. The enzyme catalyses ATP + H2O + a folded polypeptide = ADP + phosphate + an unfolded polypeptide.. In terms of biological role, together with its co-chaperonin GroES, plays an essential role in assisting protein folding. The GroEL-GroES system forms a nano-cage that allows encapsulation of the non-native substrate proteins and provides a physical environment optimized to promote and accelerate protein folding. The polypeptide is Chaperonin GroEL (Bordetella bronchiseptica (strain ATCC BAA-588 / NCTC 13252 / RB50) (Alcaligenes bronchisepticus)).